Consider the following 660-residue polypeptide: DNA mismatch repair protein MutL (660 aa).

Belongs to the DNA mismatch repair MutL/HexB family.

Functionally, this protein is involved in the repair of mismatches in DNA. It is required for dam-dependent methyl-directed DNA mismatch repair. May act as a 'molecular matchmaker', a protein that promotes the formation of a stable complex between two or more DNA-binding proteins in an ATP-dependent manner without itself being part of a final effector complex. The chain is DNA mismatch repair protein MutL from Streptococcus equi subsp. equi (strain 4047).